A 371-amino-acid polypeptide reads, in one-letter code: Queuine tRNA-ribosyltransferase (371 aa).

Catalysis depends on Asp-90, which acts as the Nucleophile. Catalysis depends on Asp-90, which acts as the Proton acceptor. Residues 90 to 94, Ser-91, Asp-144, Gln-189, and Gly-215 contribute to the substrate site; that span reads DSGGF. The tract at residues 246–252 is RNA binding; it reads GVGTPEN. Asp-265 acts as the Nucleophile in catalysis. Positions 270–274 are RNA binding; important for wobble base 34 recognition; that stretch reads TRNAR. Residues Cys-303, Cys-305, Cys-308, and His-334 each contribute to the Zn(2+) site.

Belongs to the queuine tRNA-ribosyltransferase family. As to quaternary structure, homodimer. Within each dimer, one monomer is responsible for RNA recognition and catalysis, while the other monomer binds to the replacement base PreQ1. Zn(2+) serves as cofactor.

The catalysed reaction is 7-aminomethyl-7-carbaguanine + guanosine(34) in tRNA = 7-aminomethyl-7-carbaguanosine(34) in tRNA + guanine. The protein operates within tRNA modification; tRNA-queuosine biosynthesis. Functionally, catalyzes the base-exchange of a guanine (G) residue with the queuine precursor 7-aminomethyl-7-deazaguanine (PreQ1) at position 34 (anticodon wobble position) in tRNAs with GU(N) anticodons (tRNA-Asp, -Asn, -His and -Tyr). Catalysis occurs through a double-displacement mechanism. The nucleophile active site attacks the C1' of nucleotide 34 to detach the guanine base from the RNA, forming a covalent enzyme-RNA intermediate. The proton acceptor active site deprotonates the incoming PreQ1, allowing a nucleophilic attack on the C1' of the ribose to form the product. After dissociation, two additional enzymatic reactions on the tRNA convert PreQ1 to queuine (Q), resulting in the hypermodified nucleoside queuosine (7-(((4,5-cis-dihydroxy-2-cyclopenten-1-yl)amino)methyl)-7-deazaguanosine). The protein is Queuine tRNA-ribosyltransferase of Helicobacter pylori (strain ATCC 700392 / 26695) (Campylobacter pylori).